The primary structure comprises 249 residues: 6-phosphogluconolactonase 3 (249 aa).

The protein belongs to the glucosamine/galactosamine-6-phosphate isomerase family. 6-phosphogluconolactonase subfamily.

Its subcellular location is the cytoplasm. It localises to the nucleus. The enzyme catalyses 6-phospho-D-glucono-1,5-lactone + H2O = 6-phospho-D-gluconate + H(+). It functions in the pathway carbohydrate degradation; pentose phosphate pathway; D-ribulose 5-phosphate from D-glucose 6-phosphate (oxidative stage): step 2/3. Hydrolysis of 6-phosphogluconolactone to 6-phosphogluconate. The polypeptide is 6-phosphogluconolactonase 3 (SOL3) (Saccharomyces cerevisiae (strain RM11-1a) (Baker's yeast)).